The primary structure comprises 586 residues: Phosphatase and actin regulator 1 (586 aa).

Residues 62–83 (RRRSKFATLGRLFKPWKWRKKK) carry the Nuclear localization signal motif. One copy of the RPEL 1 repeat lies at 92–117 (AALERKISMRQSREELIKRGVLKEMY). The tract at residues 373–414 (ECEDDKENVPHETSYDDSSCLYSRDEEEDDDDDDDDEDDDSS) is disordered. Over residues 397 to 413 (DEEEDDDDDDDDEDDDS) the composition is skewed to acidic residues. RPEL repeat units follow at residues 428–453 (DSLA…PMQT), 466–491 (TKLT…KPRN), and 504–529 (RRLT…ISFS).

This sequence belongs to the phosphatase and actin regulator family. Interacts (via RPEL repeats) with ACTA1.

It is found in the cytoplasm. The protein localises to the synapse. It localises to the nucleus. Functionally, binds actin monomers (G actin) and plays a role in the reorganization of the actin cytoskeleton and in formation of actin stress fibers. This chain is Phosphatase and actin regulator 1 (phactr1), found in Xenopus laevis (African clawed frog).